The sequence spans 238 residues: MFNDLLSELTKNILEHGGKKLIVPNEFCECVSKQGNCKLNSWLWDVPGFRRWRVTRLDAGDRLQVLNSVAYPNEQNDMPIMGIDLLWFEKKQKLVAILDFQPLVQDKEYLDRYFDGLKSLKKSFNEFNSDMKSNIYDPTKYFSPWALFCKGGNFEAENILPKIFSSFLKCYWKNLDLSKANENHIKSQEVSILHIDYDKYSAEKDPAHGLFSGFFGKEWSEKYMKEFLFPLSLENINP.

The protein belongs to the HY2 family.

The catalysed reaction is 15,16-dihydrobiliverdin + oxidized 2[4Fe-4S]-[ferredoxin] = biliverdin IXalpha + reduced 2[4Fe-4S]-[ferredoxin] + 2 H(+). Catalyzes the two-electron reduction of biliverdin IX-alpha at the C15 methine bridge. This chain is 15,16-dihydrobiliverdin:ferredoxin oxidoreductase, found in Prochlorococcus marinus (strain NATL2A).